The following is a 264-amino-acid chain: Movement protein (264 aa).

The tract at residues Y221–T264 is disordered. Basic residues predominate over residues R231–N240.

Belongs to the tobamovirus movement protein family.

The protein localises to the host cytoplasm. The protein resides in the host cytoskeleton. It is found in the host cell junction. It localises to the host plasmodesma. Transports viral genome to neighboring plant cells directly through plasmosdesmata, without any budding. The movement protein allows efficient cell to cell propagation, by bypassing the host cell wall barrier. Forms a ribonucleoprotein complex with viral RNA. Binds microtubules and modulates microtubule stability. Can bind double-stranded DNA. In Citrullus (Cucumber), this protein is Movement protein (MP).